A 267-amino-acid polypeptide reads, in one-letter code: Putative [LysW]-aminoadipate/[LysW]-glutamate kinase (267 aa).

Substrate is bound by residues 37–38 (GG), Arg64, and Asn169.

Belongs to the acetylglutamate kinase family. LysZ subfamily.

The protein localises to the cytoplasm. It carries out the reaction [amino-group carrier protein]-C-terminal-N-(1,4-dicarboxybutan-1-yl)-L-glutamine + ATP = [amino-group carrier protein]-C-terminal-N-(1-carboxy-5-phosphooxy-5-oxopentan-1-yl)-L-glutamine + ADP. The catalysed reaction is [amino-group carrier protein]-C-terminal-gamma-(L-glutamyl)-L-glutamate + ATP = [amino-group carrier protein]-C-terminal-gamma-(5-phospho-L-glutamyl)-L-glutamate + ADP. Its pathway is amino-acid biosynthesis; L-lysine biosynthesis via AAA pathway; L-lysine from L-alpha-aminoadipate (Thermus route): step 2/5. It participates in amino-acid biosynthesis; L-arginine biosynthesis. Functionally, involved in both the arginine and lysine biosynthetic pathways. Phosphorylates the LysW-bound precursors glutamate (for arginine biosynthesis), respectively alpha-aminoadipate (for lysine biosynthesis). The protein is Putative [LysW]-aminoadipate/[LysW]-glutamate kinase of Nitrosopumilus maritimus (strain SCM1).